We begin with the raw amino-acid sequence, 137 residues long: Large-conductance mechanosensitive channel (137 aa).

Transmembrane regions (helical) follow at residues 10-30 (FAMR…AAFG) and 76-96 (GVFL…FMAI).

The protein belongs to the MscL family. In terms of assembly, homopentamer.

Its subcellular location is the cell inner membrane. Channel that opens in response to stretch forces in the membrane lipid bilayer. May participate in the regulation of osmotic pressure changes within the cell. In Erwinia tasmaniensis (strain DSM 17950 / CFBP 7177 / CIP 109463 / NCPPB 4357 / Et1/99), this protein is Large-conductance mechanosensitive channel.